Here is a 459-residue protein sequence, read N- to C-terminus: Spermidine/putrescine import ATP-binding protein PotA (459 aa).

Residues 15–334 (IELIDIVKQF…PRNIWVAKFI (320 aa)) enclose the ABC transporter domain. 47–54 (GPSGSGKT) lines the ATP pocket. Residues 115 to 203 (RVPKENVKKE…EEFKNKYFKR (89 aa)) form an insert region.

Belongs to the ABC transporter superfamily. Spermidine/putrescine importer (TC 3.A.1.11.1) family. The complex is composed of two ATP-binding proteins (PotA), two transmembrane proteins (PotB and PotC) and a solute-binding protein (PotD).

It localises to the cell membrane. It carries out the reaction ATP + H2O + polyamine-[polyamine-binding protein]Side 1 = ADP + phosphate + polyamineSide 2 + [polyamine-binding protein]Side 1.. Functionally, part of the ABC transporter complex PotABCD involved in spermidine/putrescine import. Responsible for energy coupling to the transport system. In Mycoplasmopsis synoviae (strain 53) (Mycoplasma synoviae), this protein is Spermidine/putrescine import ATP-binding protein PotA.